The following is a 436-amino-acid chain: Chromosomal replication initiator protein DnaA (436 aa).

A domain I, interacts with DnaA modulators region spans residues 1–69 (MLADEVLELL…AHLFEVKTGT (69 aa)). The domain II stretch occupies residues 69 to 99 (TKPNVEITTQTKLKSSKQNQVNIKQIKAQST). Residues 100–314 (LLNPAYTFEN…SAIINLNAYA (215 aa)) form a domain III, AAA+ region region. Residues G144, G146, K147, and T148 each coordinate ATP. Positions 315–436 (NLMRQEITLD…ELKNKILTKG (122 aa)) are domain IV, binds dsDNA.

It belongs to the DnaA family. In terms of assembly, oligomerizes as a right-handed, spiral filament on DNA at oriC.

It is found in the cytoplasm. Plays an essential role in the initiation and regulation of chromosomal replication. ATP-DnaA binds to the origin of replication (oriC) to initiate formation of the DNA replication initiation complex once per cell cycle. Binds the DnaA box (a 9 base pair repeat at the origin) and separates the double-stranded (ds)DNA. Forms a right-handed helical filament on oriC DNA; dsDNA binds to the exterior of the filament while single-stranded (ss)DNA is stabiized in the filament's interior. The ATP-DnaA-oriC complex binds and stabilizes one strand of the AT-rich DNA unwinding element (DUE), permitting loading of DNA polymerase. After initiation quickly degrades to an ADP-DnaA complex that is not apt for DNA replication. Binds acidic phospholipids. The sequence is that of Chromosomal replication initiator protein DnaA from Campylobacter curvus (strain 525.92).